A 122-amino-acid polypeptide reads, in one-letter code: Small ribosomal subunit protein uS13 (122 aa).

The disordered stretch occupies residues 95–122; sequence NLPVRGQRTHTNARTRKGKAKPIAGKKK.

The protein belongs to the universal ribosomal protein uS13 family. In terms of assembly, part of the 30S ribosomal subunit. Forms a loose heterodimer with protein S19. Forms two bridges to the 50S subunit in the 70S ribosome.

Located at the top of the head of the 30S subunit, it contacts several helices of the 16S rRNA. In the 70S ribosome it contacts the 23S rRNA (bridge B1a) and protein L5 of the 50S subunit (bridge B1b), connecting the 2 subunits; these bridges are implicated in subunit movement. Contacts the tRNAs in the A and P-sites. The polypeptide is Small ribosomal subunit protein uS13 (Methylobacterium sp. (strain 4-46)).